An 89-amino-acid polypeptide reads, in one-letter code: MYLDSAKKAELFEKYGKSVKDTGSPESQIALFTFRIAHLTEHLRQNKKDFATERSLKMLVGKRRRMLDYLIKVDIERYRAIIKELGIRR.

This sequence belongs to the universal ribosomal protein uS15 family. In terms of assembly, part of the 30S ribosomal subunit. Forms a bridge to the 50S subunit in the 70S ribosome, contacting the 23S rRNA.

Functionally, one of the primary rRNA binding proteins, it binds directly to 16S rRNA where it helps nucleate assembly of the platform of the 30S subunit by binding and bridging several RNA helices of the 16S rRNA. Forms an intersubunit bridge (bridge B4) with the 23S rRNA of the 50S subunit in the ribosome. In Porphyromonas gingivalis (strain ATCC 33277 / DSM 20709 / CIP 103683 / JCM 12257 / NCTC 11834 / 2561), this protein is Small ribosomal subunit protein uS15.